The primary structure comprises 111 residues: Large ribosomal subunit protein uL24 (111 aa).

The protein belongs to the universal ribosomal protein uL24 family. Part of the 50S ribosomal subunit.

Functionally, one of two assembly initiator proteins, it binds directly to the 5'-end of the 23S rRNA, where it nucleates assembly of the 50S subunit. Its function is as follows. One of the proteins that surrounds the polypeptide exit tunnel on the outside of the subunit. The chain is Large ribosomal subunit protein uL24 from Chlamydia pneumoniae (Chlamydophila pneumoniae).